A 305-amino-acid polypeptide reads, in one-letter code: UDP-3-O-acyl-N-acetylglucosamine deacetylase (305 aa).

Zn(2+) is bound by residues histidine 78, histidine 235, and aspartate 239. The active-site Proton donor is histidine 262.

It belongs to the LpxC family. Requires Zn(2+) as cofactor.

It catalyses the reaction a UDP-3-O-[(3R)-3-hydroxyacyl]-N-acetyl-alpha-D-glucosamine + H2O = a UDP-3-O-[(3R)-3-hydroxyacyl]-alpha-D-glucosamine + acetate. It participates in glycolipid biosynthesis; lipid IV(A) biosynthesis; lipid IV(A) from (3R)-3-hydroxytetradecanoyl-[acyl-carrier-protein] and UDP-N-acetyl-alpha-D-glucosamine: step 2/6. In terms of biological role, catalyzes the hydrolysis of UDP-3-O-myristoyl-N-acetylglucosamine to form UDP-3-O-myristoylglucosamine and acetate, the committed step in lipid A biosynthesis. The protein is UDP-3-O-acyl-N-acetylglucosamine deacetylase of Citrifermentans bemidjiense (strain ATCC BAA-1014 / DSM 16622 / JCM 12645 / Bem) (Geobacter bemidjiensis).